Reading from the N-terminus, the 145-residue chain is Large ribosomal subunit protein uL13 (145 aa).

It belongs to the universal ribosomal protein uL13 family. As to quaternary structure, part of the 50S ribosomal subunit.

Its function is as follows. This protein is one of the early assembly proteins of the 50S ribosomal subunit, although it is not seen to bind rRNA by itself. It is important during the early stages of 50S assembly. The polypeptide is Large ribosomal subunit protein uL13 (Listeria innocua serovar 6a (strain ATCC BAA-680 / CLIP 11262)).